Consider the following 661-residue polypeptide: Transketolase (661 aa).

An N-acetylserine modification is found at S2. Substrate is bound at residue H31. Thiamine diphosphate-binding positions include H71 and 119–121 (GPL). Residue D160 participates in Mg(2+) binding. G161 and N190 together coordinate thiamine diphosphate. N190 and V192 together coordinate Mg(2+). H267, R359, and S386 together coordinate substrate. Residue H267 participates in thiamine diphosphate binding. The Proton donor role is filled by E413. Residue F439 participates in thiamine diphosphate binding. Substrate is bound by residues H463, D471, and R522.

It belongs to the transketolase family. Homodimer. Requires Mg(2+) as cofactor. Ca(2+) serves as cofactor. The cofactor is Mn(2+). It depends on Co(2+) as a cofactor. Thiamine diphosphate is required as a cofactor.

The enzyme catalyses D-sedoheptulose 7-phosphate + D-glyceraldehyde 3-phosphate = aldehydo-D-ribose 5-phosphate + D-xylulose 5-phosphate. Functionally, catalyzes the transfer of a two-carbon ketol group from a ketose donor to an aldose acceptor, via a covalent intermediate with the cofactor thiamine pyrophosphate. The protein is Transketolase (tkt-1) of Dictyostelium discoideum (Social amoeba).